The sequence spans 292 residues: Inhibitory synaptic factor 1 (292 aa).

Residues 1–25 are disordered; sequence MNIRGAPDLGQPSDDPNSGGERERI. A coiled-coil region spans residues 30-63; the sequence is KMVIGQLEGILRELKEVAKELREVVSQIDKLTSD. The tract at residues 120–292 is disordered; the sequence is TPSDSVDGPE…ATKQKAKGKN (173 aa). A compositionally biased stretch (basic and acidic residues) spans 180-192; sequence GTRERVRFSDKVL. Residues 198–216 are compositionally biased toward acidic residues; sequence CDDEEGDGEEGEEEEEGDL. Polar residues predominate over residues 263 to 285; sequence RNSSTQTVSDKSTQTVLPYTATK.

Belongs to the INSYN1 family. Interacts with GPHN.

The protein resides in the postsynaptic density. In terms of biological role, component of the protein machinery at the inhibitory synapses, probably acting as a scaffold. Inhibitory synapses dampen neuronal activity through postsynaptic hyperpolarization. This synaptic inhibition is fundamental for the functioning of the central nervous system, shaping and orchestrating the flow of information through neuronal networks to generate a precise neural code. The polypeptide is Inhibitory synaptic factor 1 (Insyn1) (Mus musculus (Mouse)).